A 408-amino-acid chain; its full sequence is LL-diaminopimelate aminotransferase (408 aa).

Substrate contacts are provided by Tyr15 and Gly42. Residues Tyr72, 108 to 109 (SK), Tyr132, Asn187, Tyr218, and 246 to 248 (SFS) contribute to the pyridoxal 5'-phosphate site. Substrate contacts are provided by Lys109, Tyr132, and Asn187. The residue at position 249 (Lys249) is an N6-(pyridoxal phosphate)lysine. Pyridoxal 5'-phosphate is bound by residues Arg257 and Asn292. Asn292 and Arg388 together coordinate substrate.

This sequence belongs to the class-I pyridoxal-phosphate-dependent aminotransferase family. LL-diaminopimelate aminotransferase subfamily. In terms of assembly, homodimer. It depends on pyridoxal 5'-phosphate as a cofactor.

The catalysed reaction is (2S,6S)-2,6-diaminopimelate + 2-oxoglutarate = (S)-2,3,4,5-tetrahydrodipicolinate + L-glutamate + H2O + H(+). It functions in the pathway amino-acid biosynthesis; L-lysine biosynthesis via DAP pathway; LL-2,6-diaminopimelate from (S)-tetrahydrodipicolinate (aminotransferase route): step 1/1. Involved in the synthesis of meso-diaminopimelate (m-DAP or DL-DAP), required for both lysine and peptidoglycan biosynthesis. Catalyzes the direct conversion of tetrahydrodipicolinate to LL-diaminopimelate. The chain is LL-diaminopimelate aminotransferase from Synechococcus sp. (strain RCC307).